Reading from the N-terminus, the 113-residue chain is CRISPR-associated endoribonuclease Cas2 2 (113 aa).

Residue D32 coordinates Mg(2+).

Belongs to the CRISPR-associated endoribonuclease Cas2 protein family. Homodimer, forms a heterotetramer with a Cas1 homodimer. The cofactor is Mg(2+).

Functionally, CRISPR (clustered regularly interspaced short palindromic repeat), is an adaptive immune system that provides protection against mobile genetic elements (viruses, transposable elements and conjugative plasmids). CRISPR clusters contain sequences complementary to antecedent mobile elements and target invading nucleic acids. CRISPR clusters are transcribed and processed into CRISPR RNA (crRNA). Functions as a ssRNA-specific endoribonuclease. Involved in the integration of spacer DNA into the CRISPR cassette. This Nitrosomonas europaea (strain ATCC 19718 / CIP 103999 / KCTC 2705 / NBRC 14298) protein is CRISPR-associated endoribonuclease Cas2 2 (cas22).